The sequence spans 211 residues: Large ribosomal subunit protein uL4 (211 aa).

A disordered region spans residues 41–87 (QAHARQGTASTLTRSEVRGGGRKPYKQKGTGRARQGSIRTPLRPGGG). The span at 60–71 (GGRKPYKQKGTG) shows a compositional bias: basic residues.

It belongs to the universal ribosomal protein uL4 family. As to quaternary structure, part of the 50S ribosomal subunit.

Functionally, one of the primary rRNA binding proteins, this protein initially binds near the 5'-end of the 23S rRNA. It is important during the early stages of 50S assembly. It makes multiple contacts with different domains of the 23S rRNA in the assembled 50S subunit and ribosome. In terms of biological role, forms part of the polypeptide exit tunnel. This is Large ribosomal subunit protein uL4 from Parasynechococcus marenigrum (strain WH8102).